We begin with the raw amino-acid sequence, 338 residues long: Ribosomal RNA small subunit methyltransferase C (338 aa).

This sequence belongs to the methyltransferase superfamily. RsmC family. In terms of assembly, monomer.

The protein resides in the cytoplasm. It catalyses the reaction guanosine(1207) in 16S rRNA + S-adenosyl-L-methionine = N(2)-methylguanosine(1207) in 16S rRNA + S-adenosyl-L-homocysteine + H(+). In terms of biological role, specifically methylates the guanine in position 1207 of 16S rRNA in the 30S particle. The chain is Ribosomal RNA small subunit methyltransferase C from Acinetobacter baylyi (strain ATCC 33305 / BD413 / ADP1).